A 655-amino-acid chain; its full sequence is MTQKSFPIAPEFLAAANITAEQYAEQYKQSIASPEATDAFWAERAELIDWIKKPTKISDVSYDLEDFRIKWFEDGELNISVNCLDRHVRNNPYKPAIIWEGDHPSLHKIISFKELHEAVCRLGNAMRKLGVKKGDRVTLYMPMIPEAMVAMLACTRIGAVHSVVFGGFSAESLGNRIIDSQSKLVITADEGIRGNKRTPLKANVDRALDMDGTDSVSNVIVVHRTGNSVPMSGRRDIWYHSLVDGESQHCEPEVMNAEDPLFLLYTSGSTGKPKGVLHTTGGYITYALSTFRDVFDIKEDDVYWCTADVGWVTGHTYATYAPLANGTTTVMFEGVPEYPTWARIGHIIDKHQITVLYTAPTAIRAMMKEGDTFVRESDRSSLRLLGTVGEPINPEAWDWYYHVVGGSKCPVVDTWWQTETGGIMLAPIPGTVAMKPGAAMNPLYGIVPEVIDTDGVALEGAAEGNLVINSSWPGQMRTIYQDHARFLTTYFTEYPGYYFTGDGVQRDEDGHYWITGRVDDVLNVSGHRLGTAEIESSIVAHPATAEAAVVGMPHDIRGMGICAFVILKSSETATESLKSELNRHVRSEIGPIANLDAIYMVNVLPKTRSGKIMRRILRSLAAGQYVGLGDLSTLADSSVINELVEVVKTERAKSH.

Residues Arg-193–Lys-196 and Thr-313 contribute to the CoA site. ATP contacts are provided by residues Gly-389–Pro-391, Asp-413–Thr-418, Asp-502, and Arg-517. Ser-525 provides a ligand contact to CoA. Residue Arg-528 participates in ATP binding. 2 residues coordinate Mg(2+): Val-539 and His-541. Arg-586 is a CoA binding site. N6-acetyllysine is present on Lys-611.

This sequence belongs to the ATP-dependent AMP-binding enzyme family. Mg(2+) is required as a cofactor. Acetylated. Deacetylation by the SIR2-homolog deacetylase activates the enzyme.

It catalyses the reaction acetate + ATP + CoA = acetyl-CoA + AMP + diphosphate. In terms of biological role, catalyzes the conversion of acetate into acetyl-CoA (AcCoA), an essential intermediate at the junction of anabolic and catabolic pathways. AcsA undergoes a two-step reaction. In the first half reaction, AcsA combines acetate with ATP to form acetyl-adenylate (AcAMP) intermediate. In the second half reaction, it can then transfer the acetyl group from AcAMP to the sulfhydryl group of CoA, forming the product AcCoA. The chain is Acetyl-coenzyme A synthetase from Psychrobacter cryohalolentis (strain ATCC BAA-1226 / DSM 17306 / VKM B-2378 / K5).